We begin with the raw amino-acid sequence, 100 residues long: uncharacterized protein (100 aa).

Transmembrane regions (helical) follow at residues 17–37 (IIIL…SVSF) and 78–98 (MVDK…TIPF).

The protein resides in the endoplasmic reticulum membrane. This is an uncharacterized protein from Saccharomyces cerevisiae (strain ATCC 204508 / S288c) (Baker's yeast).